The primary structure comprises 444 residues: Protein Z-dependent protease inhibitor (444 aa).

The N-terminal stretch at 1–21 is a signal peptide; that stretch reads MKVVPSLLLSVLLAQVWLVPG. The tract at residues 24 to 65 is disordered; sequence PSPQSPETPAPQNQTSRVVQAPKEEEEDEQEASEEKASEEEK. The N-linked (GlcNAc...) asparagine glycan is linked to Asn-36. Ser-56 is modified (phosphoserine; by FAM20C). The segment covering 56–65 has biased composition (basic and acidic residues); the sequence is SEEKASEEEK. A heparin-binding region spans residues 136–153; that stretch reads TKPGLLPSLFKGLRETLS. N-linked (GlcNAc...) asparagine glycans are attached at residues Asn-180, Asn-197, and Asn-295.

This sequence belongs to the serpin family. Interacts with PROZ. Phosphorylated by FAM20C in the extracellular medium. As to expression, expressed by the liver and secreted in plasma.

It is found in the secreted. Functionally, inhibits activity of the coagulation protease factor Xa in the presence of PROZ, calcium and phospholipids. Also inhibits factor XIa in the absence of cofactors. The protein is Protein Z-dependent protease inhibitor (SERPINA10) of Homo sapiens (Human).